A 251-amino-acid polypeptide reads, in one-letter code: 14-3-3-like protein (251 aa).

This sequence belongs to the 14-3-3 family. As to expression, most abundant in roots and flowers.

The polypeptide is 14-3-3-like protein (Nicotiana tabacum (Common tobacco)).